Here is a 333-residue protein sequence, read N- to C-terminus: tRNA dimethylallyltransferase (333 aa).

Residue 16–23 participates in ATP binding; it reads GPTASGKT. 18 to 23 provides a ligand contact to substrate; that stretch reads TASGKT. Interaction with substrate tRNA regions lie at residues 41–44, 165–169, and 253–258; these read DSAL, QRISR, and RCVGYR.

The protein belongs to the IPP transferase family. As to quaternary structure, monomer. Mg(2+) is required as a cofactor.

The catalysed reaction is adenosine(37) in tRNA + dimethylallyl diphosphate = N(6)-dimethylallyladenosine(37) in tRNA + diphosphate. In terms of biological role, catalyzes the transfer of a dimethylallyl group onto the adenine at position 37 in tRNAs that read codons beginning with uridine, leading to the formation of N6-(dimethylallyl)adenosine (i(6)A). In Polaromonas sp. (strain JS666 / ATCC BAA-500), this protein is tRNA dimethylallyltransferase.